The primary structure comprises 275 residues: tRNA pseudouridine synthase A (275 aa).

Asp-72 functions as the Nucleophile in the catalytic mechanism. Substrate is bound at residue Tyr-133.

It belongs to the tRNA pseudouridine synthase TruA family. As to quaternary structure, homodimer.

It carries out the reaction uridine(38/39/40) in tRNA = pseudouridine(38/39/40) in tRNA. Its function is as follows. Formation of pseudouridine at positions 38, 39 and 40 in the anticodon stem and loop of transfer RNAs. The chain is tRNA pseudouridine synthase A from Gluconobacter oxydans (strain 621H) (Gluconobacter suboxydans).